We begin with the raw amino-acid sequence, 208 residues long: MKEQNESFVVDFVGGAVGHRFRSGEGRGQALPKAAGFTKGRTPKIVDATAGLGRDAFLLASLGAEVTLIERSPGMHAHLADGISRALEAGGAYAEAASRMTLLQGDSRQLLKELSPEVVVIDPMHPPRHNTALVKKEMRVLRELVGSDPDQVELMEVALAHATKRVVLKWPLRADPMPGIRKPSHQIIGKNTRYDVFMIFGNSLDQQE.

Residues 54-55, 70-71, and Asp-122 contribute to the S-adenosyl-L-methionine site; these read RD and ER.

This sequence belongs to the methyltransferase superfamily. RsmJ family.

It localises to the cytoplasm. The enzyme catalyses guanosine(1516) in 16S rRNA + S-adenosyl-L-methionine = N(2)-methylguanosine(1516) in 16S rRNA + S-adenosyl-L-homocysteine + H(+). Its function is as follows. Specifically methylates the guanosine in position 1516 of 16S rRNA. The chain is Ribosomal RNA small subunit methyltransferase J from Agrobacterium fabrum (strain C58 / ATCC 33970) (Agrobacterium tumefaciens (strain C58)).